A 171-amino-acid chain; its full sequence is Peptide methionine sulfoxide reductase MsrA (171 aa).

Cys-13 is a catalytic residue.

Belongs to the MsrA Met sulfoxide reductase family.

It catalyses the reaction L-methionyl-[protein] + [thioredoxin]-disulfide + H2O = L-methionyl-(S)-S-oxide-[protein] + [thioredoxin]-dithiol. It carries out the reaction [thioredoxin]-disulfide + L-methionine + H2O = L-methionine (S)-S-oxide + [thioredoxin]-dithiol. In terms of biological role, has an important function as a repair enzyme for proteins that have been inactivated by oxidation. Catalyzes the reversible oxidation-reduction of methionine sulfoxide in proteins to methionine. The sequence is that of Peptide methionine sulfoxide reductase MsrA from Mycolicibacterium paratuberculosis (strain ATCC BAA-968 / K-10) (Mycobacterium paratuberculosis).